The chain runs to 80 residues: Small ribosomal subunit protein uS17 (80 aa).

Belongs to the universal ribosomal protein uS17 family. In terms of assembly, part of the 30S ribosomal subunit.

In terms of biological role, one of the primary rRNA binding proteins, it binds specifically to the 5'-end of 16S ribosomal RNA. This chain is Small ribosomal subunit protein uS17, found in Microcystis aeruginosa (strain NIES-843 / IAM M-2473).